Consider the following 486-residue polypeptide: Catalase (486 aa).

The segment at Met1–Pro28 is disordered. Catalysis depends on residues His54 and Asn127. Position 337 (Tyr337) interacts with heme.

This sequence belongs to the catalase family. Homodimer. Heme is required as a cofactor.

The enzyme catalyses 2 H2O2 = O2 + 2 H2O. Decomposes hydrogen peroxide into water and oxygen; serves to protect cells from the toxic effects of hydrogen peroxide. May be involved in aerotolerance of B.fragilis. The polypeptide is Catalase (katA) (Bacteroides fragilis (strain YCH46)).